A 760-amino-acid chain; its full sequence is 5-methyltetrahydropteroyltriglutamate--homocysteine methyltransferase (760 aa).

5-methyltetrahydropteroyltri-L-glutamate contacts are provided by residues 17 to 20 (RELK) and Lys-113. L-homocysteine is bound by residues 433–435 (IGS) and Glu-486. L-methionine-binding positions include 433-435 (IGS) and Glu-486. Residues 517–518 (RC) and Trp-563 contribute to the 5-methyltetrahydropteroyltri-L-glutamate site. Position 601 (Asp-601) interacts with L-homocysteine. Position 601 (Asp-601) interacts with L-methionine. Position 607 (Glu-607) interacts with 5-methyltetrahydropteroyltri-L-glutamate. Residues His-643, Cys-645, and Glu-667 each coordinate Zn(2+). His-696 (proton donor) is an active-site residue. Cys-728 is a binding site for Zn(2+).

It belongs to the vitamin-B12 independent methionine synthase family. Requires Zn(2+) as cofactor.

The enzyme catalyses 5-methyltetrahydropteroyltri-L-glutamate + L-homocysteine = tetrahydropteroyltri-L-glutamate + L-methionine. Its pathway is amino-acid biosynthesis; L-methionine biosynthesis via de novo pathway; L-methionine from L-homocysteine (MetE route): step 1/1. Functionally, catalyzes the transfer of a methyl group from 5-methyltetrahydrofolate to homocysteine resulting in methionine formation. This is 5-methyltetrahydropteroyltriglutamate--homocysteine methyltransferase from Chromobacterium violaceum (strain ATCC 12472 / DSM 30191 / JCM 1249 / CCUG 213 / NBRC 12614 / NCIMB 9131 / NCTC 9757 / MK).